The chain runs to 296 residues: Solute carrier protein FPSE_08119 (296 aa).

Transmembrane regions (helical) follow at residues 12–32 (GLAALQTALPFIVGCGSGMVA), 122–142 (AGVGAGALAAVVGNPTEVILI), and 219–239 (AVAAGIAGCLGALISQPFDFV). Solcar repeat units lie at residues 16 to 102 (LQTA…FEKE), 114 to 205 (LSFG…AKNQ), and 213 to 296 (SPPV…GPHS).

This sequence belongs to the mitochondrial carrier (TC 2.A.29) family.

It is found in the mitochondrion inner membrane. Functionally, solute carrier protein; part of the Fusarium detoxification of benzoxazolinone cluster involved in the degradation of benzoxazolinones produced by the host plant. Maize, wheat, and rye produce the 2 benzoxazinone phytoanticipins 2,4-dihy-droxy-7-methoxy-1,4-benzoxazin-3-one (DIMBOA) and 2,4-dihydroxy-1,4-benzoxazin-3-one (DIBOA) that, due to their inherent instability once released, spontaneously degrade to the more stable corresponding benzoxazolinones, 6-methoxy-2-benzoxazolinone (MBOA) and 2-benzoxazolinone (BOA), respectively. This chain is Solute carrier protein FPSE_08119, found in Fusarium pseudograminearum (strain CS3096) (Wheat and barley crown-rot fungus).